Here is a 255-residue protein sequence, read N- to C-terminus: Small ribosomal subunit protein uS2 (255 aa).

It belongs to the universal ribosomal protein uS2 family.

In Streptococcus pyogenes serotype M28 (strain MGAS6180), this protein is Small ribosomal subunit protein uS2.